The sequence spans 318 residues: ATP phosphoribosyltransferase regulatory subunit (318 aa).

The protein belongs to the class-II aminoacyl-tRNA synthetase family. HisZ subfamily. As to quaternary structure, heteromultimer composed of HisG and HisZ subunits.

The protein localises to the cytoplasm. It participates in amino-acid biosynthesis; L-histidine biosynthesis; L-histidine from 5-phospho-alpha-D-ribose 1-diphosphate: step 1/9. Required for the first step of histidine biosynthesis. May allow the feedback regulation of ATP phosphoribosyltransferase activity by histidine. The chain is ATP phosphoribosyltransferase regulatory subunit from Lactococcus lactis subsp. cremoris (strain SK11).